The sequence spans 413 residues: N-acylneuraminate cytidylyltransferase (413 aa).

The protein belongs to the CMP-NeuNAc synthase family. Requires Mg(2+) as cofactor. The cofactor is Mn(2+).

It localises to the cytoplasm. It catalyses the reaction an N-acylneuraminate + CTP = a CMP-N-acyl-beta-neuraminate + diphosphate. In terms of biological role, catalyzes the formation of CMP-N-acetylneuraminic acid (CMP-NeuNAc), which is essential for the formation of the capsule. This Streptococcus agalactiae serotype Ia (strain ATCC 27591 / A909 / CDC SS700) protein is N-acylneuraminate cytidylyltransferase (neuA).